The following is a 535-amino-acid chain: Bifunctional purine biosynthesis protein PurH (535 aa).

The region spanning 6-151 (TRLPVRRALI…KNHKDVAIVV (146 aa)) is the MGS-like domain.

The protein belongs to the PurH family.

It catalyses the reaction (6R)-10-formyltetrahydrofolate + 5-amino-1-(5-phospho-beta-D-ribosyl)imidazole-4-carboxamide = 5-formamido-1-(5-phospho-D-ribosyl)imidazole-4-carboxamide + (6S)-5,6,7,8-tetrahydrofolate. The catalysed reaction is IMP + H2O = 5-formamido-1-(5-phospho-D-ribosyl)imidazole-4-carboxamide. The protein operates within purine metabolism; IMP biosynthesis via de novo pathway; 5-formamido-1-(5-phospho-D-ribosyl)imidazole-4-carboxamide from 5-amino-1-(5-phospho-D-ribosyl)imidazole-4-carboxamide (10-formyl THF route): step 1/1. It functions in the pathway purine metabolism; IMP biosynthesis via de novo pathway; IMP from 5-formamido-1-(5-phospho-D-ribosyl)imidazole-4-carboxamide: step 1/1. The chain is Bifunctional purine biosynthesis protein PurH from Pseudomonas putida (strain GB-1).